The chain runs to 163 residues: Endoribonuclease YbeY (163 aa).

Residues histidine 121, histidine 125, and histidine 131 each contribute to the Zn(2+) site.

This sequence belongs to the endoribonuclease YbeY family. Requires Zn(2+) as cofactor.

Its subcellular location is the cytoplasm. Single strand-specific metallo-endoribonuclease involved in late-stage 70S ribosome quality control and in maturation of the 3' terminus of the 16S rRNA. This is Endoribonuclease YbeY from Synechococcus sp. (strain JA-2-3B'a(2-13)) (Cyanobacteria bacterium Yellowstone B-Prime).